Reading from the N-terminus, the 300-residue chain is Transcription initiation factor IIB (300 aa).

The TFIIB-type zinc-finger motif lies at 3–34 (KQRVCPVCGSTEFIYDPERGEIVCARCGYVIE). Residues C7, C10, C26, and C29 each coordinate Zn(2+). A run of 2 repeats spans residues 114–197 (SELD…ARNL) and 210–291 (DYVN…ELVE).

The protein belongs to the TFIIB family.

Its function is as follows. Stabilizes TBP binding to an archaeal box-A promoter. Also responsible for recruiting RNA polymerase II to the pre-initiation complex (DNA-TBP-TFIIB). This chain is Transcription initiation factor IIB, found in Pyrococcus abyssi (strain GE5 / Orsay).